Consider the following 772-residue polypeptide: Protein U58 (772 aa).

The protein belongs to the herpesviridae UL87 family.

The polypeptide is Protein U58 (U58) (Homo sapiens (Human)).